The sequence spans 457 residues: Toxin and drug export protein A (457 aa).

The signal sequence occupies residues 1–23 (MFTIKKLTLTIVVATTLTGCANI).

It belongs to the outer membrane factor (OMF) (TC 1.B.17) family. In terms of assembly, homotrimer. Probably part of a complex composed of LtxB, LtxD and TdeA, which forms a single transport channel across the two membranes.

The protein resides in the cell outer membrane. Functionally, required for secretion of the LtxA leukotoxin and resistance to various antimicrobial compounds. This Aggregatibacter actinomycetemcomitans (Actinobacillus actinomycetemcomitans) protein is Toxin and drug export protein A.